A 288-amino-acid polypeptide reads, in one-letter code: Acetyl-coenzyme A carboxylase carboxyl transferase subunit beta (288 aa).

The 257-residue stretch at 32–288 (LFAKCPACKH…LELHTEVENV (257 aa)) folds into the CoA carboxyltransferase N-terminal domain. Cys36, Cys39, Cys54, and Cys57 together coordinate Zn(2+). A C4-type zinc finger spans residues 36–57 (CPACKHTIYQKDLGKNKVCPNC).

This sequence belongs to the AccD/PCCB family. As to quaternary structure, acetyl-CoA carboxylase is a heterohexamer composed of biotin carboxyl carrier protein (AccB), biotin carboxylase (AccC) and two subunits each of ACCase subunit alpha (AccA) and ACCase subunit beta (AccD). Requires Zn(2+) as cofactor.

Its subcellular location is the cytoplasm. The enzyme catalyses N(6)-carboxybiotinyl-L-lysyl-[protein] + acetyl-CoA = N(6)-biotinyl-L-lysyl-[protein] + malonyl-CoA. It participates in lipid metabolism; malonyl-CoA biosynthesis; malonyl-CoA from acetyl-CoA: step 1/1. Its function is as follows. Component of the acetyl coenzyme A carboxylase (ACC) complex. Biotin carboxylase (BC) catalyzes the carboxylation of biotin on its carrier protein (BCCP) and then the CO(2) group is transferred by the transcarboxylase to acetyl-CoA to form malonyl-CoA. The protein is Acetyl-coenzyme A carboxylase carboxyl transferase subunit beta of Lactococcus lactis subsp. cremoris (strain MG1363).